A 146-amino-acid chain; its full sequence is Hemoglobin subunit beta-1 (146 aa).

The Globin domain maps to 2–146 (HWTEKERTII…VVSALGKQYH (145 aa)). Residues His63 and His92 each coordinate heme b.

Belongs to the globin family. As to quaternary structure, hb1 is a heterotetramer of two alpha chains and two beta-1 chains. Red blood cells.

Its function is as follows. Involved in oxygen transport from gills to the various peripheral tissues. The sequence is that of Hemoglobin subunit beta-1 from Dissostichus eleginoides (Patagonian toothfish).